The sequence spans 498 residues: ADP,ATP carrier protein 1 (498 aa).

Topologically, residues 1-33 (MSTTKSDNYISELRKVIWPIERYENKKFLPMAF) are cytoplasmic. A helical membrane pass occupies residues 34–54 (MMFCILLNYSTLRSIKDGFVV). Cys37 and Cys85 are oxidised to a cystine. The Extracellular segment spans residues 55-67 (TDIGAEAISFLKT). A helical membrane pass occupies residues 68-88 (YIVLPSAVIAMIVYVKLCDIL). Topologically, residues 89-92 (KQEN) are cytoplasmic. The chain crosses the membrane as a helical span at residues 93–113 (VFYVITSFFLAYFALFAFVLY). Topologically, residues 114–147 (PNPDLVHPNPEAIESLSLAYPNFKWFIRIVGKWS) are extracellular. Residues 148 to 168 (FASFYTMAELWGTLMLSLLFW) form a helical membrane-spanning segment. The Cytoplasmic portion of the chain corresponds to 169–184 (QFANQITKTDEAKRFY). The helical transmembrane segment at 185-205 (SMFGLLANLALPVTSLIIGYF) threads the bilayer. Topologically, residues 206–218 (LHEKTQIVAEHLK) are extracellular. Residues 219-239 (FTPLFVIMIISSLAVILTYRW) traverse the membrane as a helical segment. Residues 240–279 (MNKNVLTDPKLYDPALVKGKKAKAKMSLIESFKMIFTSKY) lie on the Cytoplasmic side of the membrane. A helical membrane pass occupies residues 280–300 (VGYIALLLIAYGISVNLVEGV). Topologically, residues 301–320 (WKSKLKELHPTKEAYTMYMG) are extracellular. A helical transmembrane segment spans residues 321-341 (QFQAYQGWVAIAFMIIGSNIL). The Cytoplasmic portion of the chain corresponds to 342–348 (RKVSWLT). The chain crosses the membrane as a helical span at residues 349-369 (AAMITPLMMLITGIAFFAFIF). The Extracellular segment spans residues 370–379 (FDSVIAMYLT). The chain crosses the membrane as a helical span at residues 380-400 (GILASGPLALAVMIGTIQNVL). At 401-438 (SKGVKYSLFDATKNMAYIPLDKDLRVKGQAAVEVIGGR) the chain is on the cytoplasmic side. 436 to 442 (GGRFGKS) lines the ATP pocket. A helical transmembrane segment spans residues 439–459 (FGKSGGAIIQSTFFIIFPALG). Residues 460 to 465 (FVEATP) lie on the Extracellular side of the membrane. The chain crosses the membrane as a helical span at residues 466–486 (YFASIFFVIVILWIYAVKGLN). The Cytoplasmic segment spans residues 487-498 (KEYQVLVNNTEK).

This sequence belongs to the ADP/ATP translocase tlc family.

The protein resides in the cell membrane. Provides the rickettsial cell with host ATP in exchange for rickettsial ADP. This is an obligate exchange system. This energy acquiring activity is an important component of rickettsial parasitism. This chain is ADP,ATP carrier protein 1 (tlcA), found in Rickettsia bellii (strain RML369-C).